We begin with the raw amino-acid sequence, 123 residues long: Ribosome-binding factor A (123 aa).

It belongs to the RbfA family. As to quaternary structure, monomer. Binds 30S ribosomal subunits, but not 50S ribosomal subunits or 70S ribosomes.

The protein localises to the cytoplasm. In terms of biological role, one of several proteins that assist in the late maturation steps of the functional core of the 30S ribosomal subunit. Associates with free 30S ribosomal subunits (but not with 30S subunits that are part of 70S ribosomes or polysomes). Required for efficient processing of 16S rRNA. May interact with the 5'-terminal helix region of 16S rRNA. This is Ribosome-binding factor A from Desulfatibacillum aliphaticivorans.